Here is a 64-residue protein sequence, read N- to C-terminus: UPF0434 protein BOV_A0835 (64 aa).

Belongs to the UPF0434 family.

This is UPF0434 protein BOV_A0835 from Brucella ovis (strain ATCC 25840 / 63/290 / NCTC 10512).